Reading from the N-terminus, the 606-residue chain is Mitogen-activated protein kinase 20 (606 aa).

The region spanning 25–316 (FKVQEVIGKG…AEEALADPYF (292 aa)) is the Protein kinase domain. ATP-binding positions include 31-39 (IGKGSYGVV) and Lys-54. Asp-151 (proton acceptor) is an active-site residue. Thr-187 is subject to Phosphothreonine. The TXY motif lies at 187–189 (TDY). The residue at position 189 (Tyr-189) is a Phosphotyrosine. Thr-192 is modified (phosphothreonine).

The protein belongs to the protein kinase superfamily. CMGC Ser/Thr protein kinase family. MAP kinase subfamily. In terms of processing, dually phosphorylated on Thr-187 and Tyr-189, which activates the enzyme.

The enzyme catalyses L-seryl-[protein] + ATP = O-phospho-L-seryl-[protein] + ADP + H(+). It carries out the reaction L-threonyl-[protein] + ATP = O-phospho-L-threonyl-[protein] + ADP + H(+). With respect to regulation, activated by threonine and tyrosine phosphorylation. In Arabidopsis thaliana (Mouse-ear cress), this protein is Mitogen-activated protein kinase 20 (MPK20).